A 276-amino-acid chain; its full sequence is Protease HtpX homolog (276 aa).

A helical transmembrane segment spans residues 14–34; that stretch reads IVLFALIGQALGGTGGMLLAF. H130 contacts Zn(2+). E131 is an active-site residue. H134 is a Zn(2+) binding site. 2 helical membrane passes run 145–165 and 171–191; these read VAATLAGAITMLSRFALFFGG and LVSLLMMILAPMAAMLIQSAI. E196 contacts Zn(2+).

This sequence belongs to the peptidase M48B family. Requires Zn(2+) as cofactor.

The protein resides in the cell inner membrane. In Salinibacter ruber (strain DSM 13855 / M31), this protein is Protease HtpX homolog.